We begin with the raw amino-acid sequence, 355 residues long: Protein-glutamate methylesterase/protein-glutamine glutaminase (355 aa).

The region spanning 7–123 (AAVVVDDSQF…SVGIKQQQDE (117 aa)) is the Response regulatory domain. Position 57 is a 4-aspartylphosphate (Asp57). Positions 139–159 (TEAAAERTTSTATSTTTSRSA) are disordered. In terms of domain architecture, CheB-type methylesterase spans 161-355 (EYVDKPTLVI…DGVLDTIMRE (195 aa)). Residues Ser173, His200, and Asp297 contribute to the active site.

The protein belongs to the CheB family. In terms of processing, phosphorylated by CheA. Phosphorylation of the N-terminal regulatory domain activates the methylesterase activity.

Its subcellular location is the cytoplasm. It catalyses the reaction [protein]-L-glutamate 5-O-methyl ester + H2O = L-glutamyl-[protein] + methanol + H(+). The catalysed reaction is L-glutaminyl-[protein] + H2O = L-glutamyl-[protein] + NH4(+). Its function is as follows. Involved in chemotaxis. Part of a chemotaxis signal transduction system that modulates chemotaxis in response to various stimuli. Catalyzes the demethylation of specific methylglutamate residues introduced into the chemoreceptors (methyl-accepting chemotaxis proteins or MCP) by CheR. Also mediates the irreversible deamidation of specific glutamine residues to glutamic acid. This Natronomonas pharaonis (strain ATCC 35678 / DSM 2160 / CIP 103997 / JCM 8858 / NBRC 14720 / NCIMB 2260 / Gabara) (Halobacterium pharaonis) protein is Protein-glutamate methylesterase/protein-glutamine glutaminase.